The primary structure comprises 497 residues: G protein-coupled receptor gprM (497 aa).

The N-linked (GlcNAc...) asparagine glycan is linked to asparagine 3. 5 consecutive transmembrane segments (helical) span residues 66–86 (ISVA…VLPV), 98–118 (FTLG…PLGV), 138–158 (CAFT…WSFL), 179–199 (WGAL…MLIL), and 221–241 (YWIP…ATMA). A glycan (N-linked (GlcNAc...) asparagine) is linked at asparagine 259. 2 consecutive transmembrane segments (helical) span residues 293 to 313 (VTLV…FIEL) and 357 to 377 (LLLA…ILFA). N-linked (GlcNAc...) asparagine glycosylation is present at asparagine 421. Residues 428–497 (YKSPSPMVRS…APAVYREYDD (70 aa)) form a disordered region.

Belongs to the G-protein coupled receptor GPR1/git3 family. Interacts with gpaA.

Its subcellular location is the cell membrane. Its function is as follows. G protein-coupled receptor that plays a role in conidiation and regulation of the biosynthesis of secondary metabolites such as dihydroxynaphthalene (DHN)-melanin, via interaction with the G-protein complex alpha subunit gpaA. This is G protein-coupled receptor gprM from Aspergillus fumigatus (strain CBS 144.89 / FGSC A1163 / CEA10) (Neosartorya fumigata).